A 215-amino-acid polypeptide reads, in one-letter code: Putative BTB/POZ domain-containing protein At2g05330 (215 aa).

The 71-residue stretch at 17–87 folds into the BTB domain; the sequence is SWQKIGKLTY…LYSDGSMLSS (71 aa).

It functions in the pathway protein modification; protein ubiquitination. Its function is as follows. May act as a substrate-specific adapter of an E3 ubiquitin-protein ligase complex (CUL3-RBX1-BTB) which mediates the ubiquitination and subsequent proteasomal degradation of target proteins. The chain is Putative BTB/POZ domain-containing protein At2g05330 from Arabidopsis thaliana (Mouse-ear cress).